Reading from the N-terminus, the 209-residue chain is uncharacterized protein (209 aa).

4 consecutive transmembrane segments (helical) span residues 21 to 41 (LAYL…VFGL), 81 to 101 (ILGL…RIAA), 107 to 127 (VLVN…LYVF), and 159 to 179 (AAGA…LLFF).

The protein resides in the cell membrane. This is an uncharacterized protein from Bacillus subtilis (strain 168).